The sequence spans 1099 residues: Carbamoyl phosphate synthase large chain (1099 aa).

The carboxyphosphate synthetic domain stretch occupies residues 1-402 (MPKREDIKRI…ALGKALRSLE (402 aa)). Residues Arg129, Arg169, Gly175, Gly176, Glu208, Val210, Glu215, Gly241, Ile242, His243, Gln285, and Glu299 each contribute to the ATP site. An ATP-grasp 1 domain is found at 133 to 328 (KETMEKAGLE…IAKVAALLAV (196 aa)). Gln285, Glu299, and Asn301 together coordinate Mg(2+). Mn(2+) is bound by residues Gln285, Glu299, and Asn301. The oligomerization domain stretch occupies residues 403–541 (LDAAPKLDLE…STYNGVENEA (139 aa)). A carbamoyl phosphate synthetic domain region spans residues 542 to 944 (VPSDREKIMI…AFAKAQIAAG (403 aa)). An ATP-grasp 2 domain is found at 666–857 (AKLLKQIGLK…VARIAAKIMV (192 aa)). Arg702, Lys741, Leu743, Glu748, Gly773, Val774, His775, Ser776, Gln816, and Glu828 together coordinate ATP. 3 residues coordinate Mg(2+): Gln816, Glu828, and Asn830. 3 residues coordinate Mn(2+): Gln816, Glu828, and Asn830. Residues 945-1099 (NPLPTTGAIL…VRRLTDTWKM (155 aa)) enclose the MGS-like domain. Positions 945–1099 (NPLPTTGAIL…VRRLTDTWKM (155 aa)) are allosteric domain.

It belongs to the CarB family. In terms of assembly, composed of two chains; the small (or glutamine) chain promotes the hydrolysis of glutamine to ammonia, which is used by the large (or ammonia) chain to synthesize carbamoyl phosphate. Tetramer of heterodimers (alpha,beta)4. It depends on Mg(2+) as a cofactor. Mn(2+) is required as a cofactor.

The catalysed reaction is hydrogencarbonate + L-glutamine + 2 ATP + H2O = carbamoyl phosphate + L-glutamate + 2 ADP + phosphate + 2 H(+). The enzyme catalyses hydrogencarbonate + NH4(+) + 2 ATP = carbamoyl phosphate + 2 ADP + phosphate + 2 H(+). Its pathway is amino-acid biosynthesis; L-arginine biosynthesis; carbamoyl phosphate from bicarbonate: step 1/1. The protein operates within pyrimidine metabolism; UMP biosynthesis via de novo pathway; (S)-dihydroorotate from bicarbonate: step 1/3. Its function is as follows. Large subunit of the glutamine-dependent carbamoyl phosphate synthetase (CPSase). CPSase catalyzes the formation of carbamoyl phosphate from the ammonia moiety of glutamine, carbonate, and phosphate donated by ATP, constituting the first step of 2 biosynthetic pathways, one leading to arginine and/or urea and the other to pyrimidine nucleotides. The large subunit (synthetase) binds the substrates ammonia (free or transferred from glutamine from the small subunit), hydrogencarbonate and ATP and carries out an ATP-coupled ligase reaction, activating hydrogencarbonate by forming carboxy phosphate which reacts with ammonia to form carbamoyl phosphate. The polypeptide is Carbamoyl phosphate synthase large chain (Thermotoga sp. (strain RQ2)).